The chain runs to 141 residues: Perlwapin-like protein (141 aa).

The signal sequence occupies residues 1–19 (MNVYFILFLGVFAFIEVNC). Residues 23–71 (KSKSLGTCPKLDVSTVCVVDYKFNCLFQKQCPSGYRCCTYGCNRRCAAV) form the WAP domain. Cystine bridges form between Cys-30–Cys-60, Cys-39–Cys-64, Cys-47–Cys-59, Cys-53–Cys-68, Cys-81–Cys-105, and Cys-92–Cys-104.

As to expression, component of the organic matrix of calcified shell layers like nacre and prisms.

It is found in the secreted. In Mytilus galloprovincialis (Mediterranean mussel), this protein is Perlwapin-like protein.